Reading from the N-terminus, the 102-residue chain is MAALLVRSVVASVVDPFLHLSRLAVKPRVFSSFLLGTLPRAKPCAEVRSVLCGRPLPTLLPSLGFKTKGVIKKRCKDCYKVKRRGRWFILCKTNPKHKQRQM.

The protein belongs to the bacterial ribosomal protein bL36 family. In terms of assembly, component of the mitochondrial ribosome large subunit (39S) which comprises a 16S rRNA and about 50 distinct proteins.

Its subcellular location is the mitochondrion. The polypeptide is Large ribosomal subunit protein bL36m (Mrpl36) (Mus musculus (Mouse)).